Consider the following 238-residue polypeptide: uncharacterized protein (238 aa).

This is an uncharacterized protein from Methanocaldococcus jannaschii (strain ATCC 43067 / DSM 2661 / JAL-1 / JCM 10045 / NBRC 100440) (Methanococcus jannaschii).